The primary structure comprises 102 residues: Large ribosomal subunit protein bL21 (102 aa).

This sequence belongs to the bacterial ribosomal protein bL21 family. Part of the 50S ribosomal subunit. Contacts protein L20.

Functionally, this protein binds to 23S rRNA in the presence of protein L20. This Campylobacter jejuni subsp. jejuni serotype O:6 (strain 81116 / NCTC 11828) protein is Large ribosomal subunit protein bL21.